A 629-amino-acid chain; its full sequence is DNA mismatch repair protein MutL (629 aa).

Belongs to the DNA mismatch repair MutL/HexB family.

Its function is as follows. This protein is involved in the repair of mismatches in DNA. It is required for dam-dependent methyl-directed DNA mismatch repair. May act as a 'molecular matchmaker', a protein that promotes the formation of a stable complex between two or more DNA-binding proteins in an ATP-dependent manner without itself being part of a final effector complex. The protein is DNA mismatch repair protein MutL of Haemophilus influenzae (strain PittGG).